A 498-amino-acid polypeptide reads, in one-letter code: Glycylpeptide N-tetradecanoyltransferase 2 (498 aa).

The segment at Met1–Pro87 is disordered. Positions Glu15–Thr32 are enriched in acidic residues. Ser38 carries the phosphoserine modification. The span at Lys46–Glu57 shows a compositional bias: basic residues. The segment covering Ser61–Ser72 has biased composition (polar residues). Tetradecanoyl-CoA contacts are provided by His117, Trp122, Leu250, Val252, Ser258, Arg260, Val261, and Ala262.

This sequence belongs to the NMT family.

It localises to the cytoplasm. Its subcellular location is the membrane. The enzyme catalyses N-terminal glycyl-[protein] + tetradecanoyl-CoA = N-tetradecanoylglycyl-[protein] + CoA + H(+). It catalyses the reaction N-terminal glycyl-L-lysyl-[protein] + tetradecanoyl-CoA = N-terminal glycyl-(N(6)-tetradecanoyl)-L-lysyl-[protein] + CoA + H(+). Functionally, adds a myristoyl group to the N-terminal glycine residue of certain cellular and viral proteins. Also able to mediate N-terminal lysine myristoylation of proteins: catalyzes myristoylation of ARF6 on both 'Gly-2' and 'Lys-3'. Lysine myristoylation is required to maintain ARF6 on membranes during the GTPase cycle. This Bos taurus (Bovine) protein is Glycylpeptide N-tetradecanoyltransferase 2 (NMT2).